The chain runs to 344 residues: Glyceraldehyde-3-phosphate dehydrogenase (344 aa).

Residues 11 to 12 (TI) and glycine 110 contribute to the NAD(+) site. 139–141 (SCN) provides a ligand contact to D-glyceraldehyde 3-phosphate. The active-site Nucleophile is the cysteine 140. An NAD(+)-binding site is contributed by arginine 169. 195-196 (HG) contributes to the D-glyceraldehyde 3-phosphate binding site. Glutamine 302 is a binding site for NAD(+).

Belongs to the glyceraldehyde-3-phosphate dehydrogenase family. In terms of assembly, homotetramer.

Its subcellular location is the cytoplasm. It carries out the reaction D-glyceraldehyde 3-phosphate + phosphate + NADP(+) = (2R)-3-phospho-glyceroyl phosphate + NADPH + H(+). The catalysed reaction is D-glyceraldehyde 3-phosphate + phosphate + NAD(+) = (2R)-3-phospho-glyceroyl phosphate + NADH + H(+). The protein operates within carbohydrate degradation; glycolysis; pyruvate from D-glyceraldehyde 3-phosphate: step 1/5. This Pyrobaculum arsenaticum (strain DSM 13514 / JCM 11321 / PZ6) protein is Glyceraldehyde-3-phosphate dehydrogenase.